Here is a 187-residue protein sequence, read N- to C-terminus: Putative acyl-coenzyme A oxidase At3g06690 (187 aa).

The segment at 1–21 (MTKEPIYSPRMLHRDPDSPRP) is disordered.

This sequence belongs to the acyl-CoA oxidase family.

It carries out the reaction a 2,3-saturated acyl-CoA + O2 = a (2E)-enoyl-CoA + H2O2. In Arabidopsis thaliana (Mouse-ear cress), this protein is Putative acyl-coenzyme A oxidase At3g06690.